Reading from the N-terminus, the 113-residue chain is U11-theraphotoxin-Hhn1a (113 aa).

Residues 1-21 form the signal peptide; sequence MNTVRVTFLLVFVLAVSLGRA. Positions 22–74 are excised as a propeptide; the sequence is DKEENRMEMQEKTEQGKSYLDFAENLLLQKLEELEAKLLEEDSEESRNSRQKR. The disordered stretch occupies residues 61-83; it reads EEDSEESRNSRQKRCIGEGVPCD. 3 disulfides stabilise this stretch: cysteine 75/cysteine 90, cysteine 82/cysteine 95, and cysteine 89/cysteine 110.

The protein belongs to the neurotoxin 14 (magi-1) family. 01 (HNTX-16) subfamily. In terms of tissue distribution, expressed by the venom gland.

It localises to the secreted. Functionally, probable ion channel inhibitor. This is U11-theraphotoxin-Hhn1a from Cyriopagopus hainanus (Chinese bird spider).